Consider the following 856-residue polypeptide: Leucine--tRNA ligase (856 aa).

The 'HIGH' region signature appears at 53-63 (PYPSGNLHMGH). A 'KMSKS' region motif is present at residues 622 to 626 (KMSKS). Position 625 (Lys-625) interacts with ATP.

The protein belongs to the class-I aminoacyl-tRNA synthetase family.

The protein localises to the cytoplasm. It catalyses the reaction tRNA(Leu) + L-leucine + ATP = L-leucyl-tRNA(Leu) + AMP + diphosphate. The chain is Leucine--tRNA ligase from Prochlorococcus marinus (strain MIT 9312).